We begin with the raw amino-acid sequence, 211 residues long: FMN-dependent NADH:quinone oxidoreductase 2 (211 aa).

FMN contacts are provided by residues Ser-10 and 17-19 (SRS).

It belongs to the azoreductase type 1 family. Homodimer. FMN is required as a cofactor.

It carries out the reaction 2 a quinone + NADH + H(+) = 2 a 1,4-benzosemiquinone + NAD(+). It catalyses the reaction N,N-dimethyl-1,4-phenylenediamine + anthranilate + 2 NAD(+) = 2-(4-dimethylaminophenyl)diazenylbenzoate + 2 NADH + 2 H(+). In terms of biological role, quinone reductase that provides resistance to thiol-specific stress caused by electrophilic quinones. Functionally, also exhibits azoreductase activity. Catalyzes the reductive cleavage of the azo bond in aromatic azo compounds to the corresponding amines. The protein is FMN-dependent NADH:quinone oxidoreductase 2 of Listeria monocytogenes serotype 4b (strain F2365).